We begin with the raw amino-acid sequence, 446 residues long: Histidine--tRNA ligase (446 aa).

The protein belongs to the class-II aminoacyl-tRNA synthetase family. In terms of assembly, homodimer.

The protein resides in the cytoplasm. It carries out the reaction tRNA(His) + L-histidine + ATP = L-histidyl-tRNA(His) + AMP + diphosphate + H(+). The sequence is that of Histidine--tRNA ligase from Burkholderia vietnamiensis (strain G4 / LMG 22486) (Burkholderia cepacia (strain R1808)).